Reading from the N-terminus, the 271-residue chain is uncharacterized protein (271 aa).

Residues 1-202 form a disordered region; that stretch reads MLNSPGTRRP…APSSALSHQG (202 aa). Basic and acidic residues predominate over residues 10-23; sequence PVKEAQKYGEDSQK. Low complexity-rich tracts occupy residues 33–50 and 59–73; these read RSSVTTLSASALSDSSSP and GRPSTPARAPATSAP. Over residues 92–101 the composition is skewed to polar residues; the sequence is TRSSANQLPQ. Positions 121–142 are enriched in basic residues; it reads LRRRSHGDRCVPRSRRRPRPRP.

This is an uncharacterized protein from Homo sapiens (Human).